Here is a 647-residue protein sequence, read N- to C-terminus: DNA mismatch repair protein MutL (647 aa).

The interval 389–423 (SESSVSSVANKQQPTVKQAKRSADDSDSEHGKLDY) is disordered. Residues 409-423 (RSADDSDSEHGKLDY) are compositionally biased toward basic and acidic residues.

The protein belongs to the DNA mismatch repair MutL/HexB family.

Functionally, this protein is involved in the repair of mismatches in DNA. It is required for dam-dependent methyl-directed DNA mismatch repair. May act as a 'molecular matchmaker', a protein that promotes the formation of a stable complex between two or more DNA-binding proteins in an ATP-dependent manner without itself being part of a final effector complex. This is DNA mismatch repair protein MutL from Streptococcus thermophilus (strain ATCC BAA-491 / LMD-9).